The primary structure comprises 261 residues: Indole-3-glycerol phosphate synthase (261 aa).

Belongs to the TrpC family.

It catalyses the reaction 1-(2-carboxyphenylamino)-1-deoxy-D-ribulose 5-phosphate + H(+) = (1S,2R)-1-C-(indol-3-yl)glycerol 3-phosphate + CO2 + H2O. The protein operates within amino-acid biosynthesis; L-tryptophan biosynthesis; L-tryptophan from chorismate: step 4/5. The polypeptide is Indole-3-glycerol phosphate synthase (Paraburkholderia phymatum (strain DSM 17167 / CIP 108236 / LMG 21445 / STM815) (Burkholderia phymatum)).